The following is a 397-amino-acid chain: tRNA-specific 2-thiouridylase MnmA (397 aa).

Residues 19-26 (AMSGGVDS) and Leu45 each bind ATP. Cys113 functions as the Nucleophile in the catalytic mechanism. A disulfide bridge connects residues Cys113 and Cys210. Gly137 lines the ATP pocket. Residues 160–162 (RDQ) form an interaction with tRNA region. Catalysis depends on Cys210, which acts as the Cysteine persulfide intermediate.

This sequence belongs to the MnmA/TRMU family.

The protein resides in the cytoplasm. The enzyme catalyses S-sulfanyl-L-cysteinyl-[protein] + uridine(34) in tRNA + AH2 + ATP = 2-thiouridine(34) in tRNA + L-cysteinyl-[protein] + A + AMP + diphosphate + H(+). Catalyzes the 2-thiolation of uridine at the wobble position (U34) of tRNA, leading to the formation of s(2)U34. In Bradyrhizobium sp. (strain BTAi1 / ATCC BAA-1182), this protein is tRNA-specific 2-thiouridylase MnmA.